The following is a 495-amino-acid chain: Cobyric acid synthase (495 aa).

The region spanning 252 to 440 (RPKVVVLAYP…VHGLFADDGL (189 aa)) is the GATase cobBQ-type domain. The Nucleophile role is filled by Cys334. His432 is an active-site residue.

The protein belongs to the CobB/CobQ family. CobQ subfamily.

Its pathway is cofactor biosynthesis; adenosylcobalamin biosynthesis. Functionally, catalyzes amidations at positions B, D, E, and G on adenosylcobyrinic A,C-diamide. NH(2) groups are provided by glutamine, and one molecule of ATP is hydrogenolyzed for each amidation. This is Cobyric acid synthase from Bradyrhizobium sp. (strain ORS 278).